The sequence spans 435 residues: 3-phosphoshikimate 1-carboxyvinyltransferase (435 aa).

3-phosphoshikimate-binding residues include lysine 21, serine 22, and arginine 26. Residue lysine 21 coordinates phosphoenolpyruvate. 2 residues coordinate phosphoenolpyruvate: glycine 98 and arginine 126. 6 residues coordinate 3-phosphoshikimate: serine 169, serine 170, glutamine 171, serine 197, aspartate 312, and lysine 339. Glutamine 171 provides a ligand contact to phosphoenolpyruvate. The active-site Proton acceptor is aspartate 312. Positions 343, 386, and 412 each coordinate phosphoenolpyruvate.

This sequence belongs to the EPSP synthase family. As to quaternary structure, monomer.

Its subcellular location is the cytoplasm. The enzyme catalyses 3-phosphoshikimate + phosphoenolpyruvate = 5-O-(1-carboxyvinyl)-3-phosphoshikimate + phosphate. Its pathway is metabolic intermediate biosynthesis; chorismate biosynthesis; chorismate from D-erythrose 4-phosphate and phosphoenolpyruvate: step 6/7. Catalyzes the transfer of the enolpyruvyl moiety of phosphoenolpyruvate (PEP) to the 5-hydroxyl of shikimate-3-phosphate (S3P) to produce enolpyruvyl shikimate-3-phosphate and inorganic phosphate. In Clostridium beijerinckii (strain ATCC 51743 / NCIMB 8052) (Clostridium acetobutylicum), this protein is 3-phosphoshikimate 1-carboxyvinyltransferase.